A 160-amino-acid polypeptide reads, in one-letter code: Flavodoxin (160 aa).

The Flavodoxin-like domain maps to 3-153 (ISILYSSKTG…NARIFGERIA (151 aa)).

The protein belongs to the flavodoxin family. FMN is required as a cofactor.

Functionally, low-potential electron donor to a number of redox enzymes. The sequence is that of Flavodoxin (floX) from Clostridium saccharobutylicum.